The sequence spans 445 residues: 3-phosphoshikimate 1-carboxyvinyltransferase (445 aa).

Residues Lys28, Ser29, and Arg33 each contribute to the 3-phosphoshikimate site. Lys28 lines the phosphoenolpyruvate pocket. Residues Gly101 and Arg129 each contribute to the phosphoenolpyruvate site. Positions 175, 177, 328, and 355 each coordinate 3-phosphoshikimate. Phosphoenolpyruvate is bound at residue Gln177. Catalysis depends on Asp328, which acts as the Proton acceptor. 2 residues coordinate phosphoenolpyruvate: Arg359 and Arg402.

It belongs to the EPSP synthase family. In terms of assembly, monomer.

It localises to the cytoplasm. The catalysed reaction is 3-phosphoshikimate + phosphoenolpyruvate = 5-O-(1-carboxyvinyl)-3-phosphoshikimate + phosphate. It functions in the pathway metabolic intermediate biosynthesis; chorismate biosynthesis; chorismate from D-erythrose 4-phosphate and phosphoenolpyruvate: step 6/7. Its function is as follows. Catalyzes the transfer of the enolpyruvyl moiety of phosphoenolpyruvate (PEP) to the 5-hydroxyl of shikimate-3-phosphate (S3P) to produce enolpyruvyl shikimate-3-phosphate and inorganic phosphate. In Rhodopseudomonas palustris (strain HaA2), this protein is 3-phosphoshikimate 1-carboxyvinyltransferase.